Reading from the N-terminus, the 567-residue chain is Urease subunit alpha (567 aa).

Residues 129 to 567 (GGVDTHIHFI…LPMAQRYFLF (439 aa)) enclose the Urease domain. Residues His134, His136, and Lys217 each contribute to the Ni(2+) site. Lys217 is subject to N6-carboxylysine. His219 contacts substrate. 2 residues coordinate Ni(2+): His246 and His272. The active-site Proton donor is the His320. Position 360 (Asp360) interacts with Ni(2+).

The protein belongs to the metallo-dependent hydrolases superfamily. Urease alpha subunit family. As to quaternary structure, heterotrimer of UreA (gamma), UreB (beta) and UreC (alpha) subunits. Three heterotrimers associate to form the active enzyme. It depends on Ni cation as a cofactor. Carboxylation allows a single lysine to coordinate two nickel ions.

Its subcellular location is the cytoplasm. It carries out the reaction urea + 2 H2O + H(+) = hydrogencarbonate + 2 NH4(+). It functions in the pathway nitrogen metabolism; urea degradation; CO(2) and NH(3) from urea (urease route): step 1/1. In Proteus hauseri, this protein is Urease subunit alpha.